Consider the following 121-residue polypeptide: MSFYESVFIIRQDVSLNDIDKIVDDFTKIIKDNNGTIIKKEYWGLRTLAYKIGNNKKGHYYFLGIDITSNVKEELERKMKLNENIIRFLTIKADSISSEPSPILKNQSTENTPVIDVTINN.

This sequence belongs to the bacterial ribosomal protein bS6 family.

In terms of biological role, binds together with bS18 to 16S ribosomal RNA. In Rickettsia prowazekii (strain Madrid E), this protein is Small ribosomal subunit protein bS6 (rpsF).